A 217-amino-acid chain; its full sequence is Probable transaldolase (217 aa).

Catalysis depends on Lys84, which acts as the Schiff-base intermediate with substrate.

The protein belongs to the transaldolase family. Type 3B subfamily.

The protein resides in the cytoplasm. It carries out the reaction D-sedoheptulose 7-phosphate + D-glyceraldehyde 3-phosphate = D-erythrose 4-phosphate + beta-D-fructose 6-phosphate. It functions in the pathway carbohydrate degradation; pentose phosphate pathway; D-glyceraldehyde 3-phosphate and beta-D-fructose 6-phosphate from D-ribose 5-phosphate and D-xylulose 5-phosphate (non-oxidative stage): step 2/3. Its function is as follows. Transaldolase is important for the balance of metabolites in the pentose-phosphate pathway. In Roseiflexus castenholzii (strain DSM 13941 / HLO8), this protein is Probable transaldolase.